The following is a 111-amino-acid chain: Aspartate 1-decarboxylase (111 aa).

Ser25 (schiff-base intermediate with substrate; via pyruvic acid) is an active-site residue. Ser25 bears the Pyruvic acid (Ser) mark. Thr57 contacts substrate. The active-site Proton donor is the Tyr58. A substrate-binding site is contributed by 73-75 (GPA).

The protein belongs to the PanD family. Heterooctamer of four alpha and four beta subunits. It depends on pyruvate as a cofactor. Is synthesized initially as an inactive proenzyme, which is activated by self-cleavage at a specific serine bond to produce a beta-subunit with a hydroxyl group at its C-terminus and an alpha-subunit with a pyruvoyl group at its N-terminus.

The protein resides in the cytoplasm. The enzyme catalyses L-aspartate + H(+) = beta-alanine + CO2. The protein operates within cofactor biosynthesis; (R)-pantothenate biosynthesis; beta-alanine from L-aspartate: step 1/1. Functionally, catalyzes the pyruvoyl-dependent decarboxylation of aspartate to produce beta-alanine. The sequence is that of Aspartate 1-decarboxylase from Francisella tularensis subsp. novicida (strain U112).